The sequence spans 171 residues: UPF0763 protein Hac_0849 (171 aa).

Belongs to the UPF0763 family.

The sequence is that of UPF0763 protein Hac_0849 from Helicobacter acinonychis (strain Sheeba).